The primary structure comprises 324 residues: DNA primase small subunit PriS (324 aa).

Catalysis depends on residues Asp94, Asp96, and Asp274.

Belongs to the eukaryotic-type primase small subunit family. In terms of assembly, heterodimer of a small subunit (PriS) and a large subunit (PriL). Mg(2+) is required as a cofactor. The cofactor is Mn(2+).

Its function is as follows. Catalytic subunit of DNA primase, an RNA polymerase that catalyzes the synthesis of short RNA molecules used as primers for DNA polymerase during DNA replication. The small subunit contains the primase catalytic core and has DNA synthesis activity on its own. Binding to the large subunit stabilizes and modulates the activity, increasing the rate of DNA synthesis while decreasing the length of the DNA fragments, and conferring RNA synthesis capability. The DNA polymerase activity may enable DNA primase to also catalyze primer extension after primer synthesis. May also play a role in DNA repair. The polypeptide is DNA primase small subunit PriS (Methanobrevibacter smithii (strain ATCC 35061 / DSM 861 / OCM 144 / PS)).